The following is a 198-amino-acid chain: Recombination protein RecR (198 aa).

The C4-type zinc-finger motif lies at 58–73 (CKVCQTLTDKEICPIC). The 95-residue stretch at 81 to 175 (KVIMVVENTR…KVSRIASGVP (95 aa)) folds into the Toprim domain.

This sequence belongs to the RecR family.

May play a role in DNA repair. It seems to be involved in an RecBC-independent recombinational process of DNA repair. It may act with RecF and RecO. The protein is Recombination protein RecR of Lachnoclostridium phytofermentans (strain ATCC 700394 / DSM 18823 / ISDg) (Clostridium phytofermentans).